A 316-amino-acid chain; its full sequence is Cytochrome c biogenesis protein CcsA (316 aa).

The next 7 membrane-spanning stretches (helical) occupy residues 15–35 (FSICSIVITIRLINLVVTTIL), 44–64 (GIITTFLCLTGFLVTRWIYSG), 71–91 (LYESLIFLSWSFSLIHIVAYL), 142–162 (MILSYAALLCGSLLSAALLVI), 220–240 (VISLGFIFLTMGILSGAVWAN), 247–267 (WSWDPKETWAFITWIIFAIYL), and 281–301 (AIVAVIGFLIIWICYFGVNLL).

It belongs to the CcmF/CycK/Ccl1/NrfE/CcsA family. May interact with Ccs1.

The protein localises to the plastid. The protein resides in the chloroplast thylakoid membrane. In terms of biological role, required during biogenesis of c-type cytochromes (cytochrome c6 and cytochrome f) at the step of heme attachment. The chain is Cytochrome c biogenesis protein CcsA from Trachelium caeruleum (Blue throatwort).